A 918-amino-acid polypeptide reads, in one-letter code: Bromodomain testis-specific protein (918 aa).

Residues 1–26 are disordered; that stretch reads MSDVKPPQHFTMNGNPPPPEFKNPKK. Positions 29-135 constitute a Bromo 1 domain; it reads RLTNHLQYIE…KLFLEKVAEM (107 aa). A Nuclear localization signal motif is present at residues 204-215; it reads NGVKRKADTTTP. Disordered stretches follow at residues 241-267, 379-430, 575-712, 738-764, and 862-899; these read RGSGRPIKPPCKDLPESPPQHQVGRRT, EPKN…RAHR, KNKP…SLVS, IPPLLSPLTSPSAAMPATGSQSTSSSQ, and DTPKAPEPSSVLQNSVDREREMARKREQERRRREAMSG. Positions 267 to 376 constitute a Bromo 2 domain; the sequence is TKLSERLKYC…DVFEFRFSKI (110 aa). Low complexity predominate over residues 399 to 416; the sequence is SPSSSESSDSESSSPENS. The stretch at 426-452 forms a coiled coil; it reads ERAHRLASLEEQQLKAVREQLQLLTQT. The NET domain occupies 496 to 578; the sequence is DSEEEMNTLP…GCLRKKKNKP (83 aa). Basic residues predominate over residues 575-584; the sequence is KNKPPKKSKI. Residues 605–617 show a composition bias toward basic and acidic residues; that stretch reads KIETDGEIKDTTH. Low complexity-rich tracts occupy residues 622–648 and 739–764; these read SDSSSSSSSSDSSSSDSSSSDSCDSDS and PPLLSPLTSPSAAMPATGSQSTSSSQ. Positions 815 to 902 form a coiled coil; sequence EKELTTASRG…RREAMSGVID (88 aa). The segment covering 877–896 has biased composition (basic and acidic residues); it reads VDREREMARKREQERRRREA.

The protein belongs to the BET family.

The protein resides in the nucleus. Its function is as follows. Testis-specific chromatin protein that specifically binds histone H4 acetylated at 'Lys-5' and 'Lys-8' (H4K5ac and H4K8ac, respectively) and plays a key role in spermatogenesis. Required in late pachytene spermatocytes: plays a role in meiotic and post-meiotic cells by binding to acetylated histones at the promoter of specific meiotic and post-meiotic genes, facilitating their activation at the appropriate time. In the post-meiotic phase of spermatogenesis, binds to hyperacetylated histones and participates in their general removal from DNA. Also recognizes and binds a subset of butyrylated histones: able to bind histone H4 butyrylated at 'Lys-8' (H4K8ac), while it is not able to bind H4 butyrylated at 'Lys-5' (H4K5ac). This chain is Bromodomain testis-specific protein (brdt), found in Danio rerio (Zebrafish).